Reading from the N-terminus, the 257-residue chain is Enterotoxin type A (257 aa).

An N-terminal signal peptide occupies residues 1–24; the sequence is MKKTAFTLLLFIALTLTTSPLVNG. Cysteine 120 and cysteine 130 are joined by a disulfide. Zn(2+) is bound by residues histidine 211, histidine 249, and aspartate 251.

This sequence belongs to the staphylococcal/streptococcal toxin family. As to quaternary structure, monomer. Interacts with MHC class II molecules alpha/HLA-DRB1 and beta/HLA-DRA chains. The interaction with MHC-II molecules occurs at both zinc-dependent and zinc-independent sites. Interacts with T-cell receptor beta variable 7-9/TRBV7-9. It depends on Zn(2+) as a cofactor.

The protein localises to the secreted. Its function is as follows. Staphylococcal enterotoxin that activates the host immune system by binding as unprocessed molecules to major histocompatibility (MHC) complex class II and T-cell receptor (TCR) molecules. In turn, waves of cellular activation, cytokine production, and migration into the lung tissue and airways occur via alphabeta T-cells. Also causes the intoxication staphylococcal food poisoning syndrome. The illness is characterized by high fever, hypotension, diarrhea, shock, and in some cases death. The sequence is that of Enterotoxin type A (entA) from Staphylococcus aureus.